Consider the following 214-residue polypeptide: N-(5'-phosphoribosyl)anthranilate isomerase (214 aa).

It belongs to the TrpF family.

It catalyses the reaction N-(5-phospho-beta-D-ribosyl)anthranilate = 1-(2-carboxyphenylamino)-1-deoxy-D-ribulose 5-phosphate. It participates in amino-acid biosynthesis; L-tryptophan biosynthesis; L-tryptophan from chorismate: step 3/5. This Haloarcula marismortui (strain ATCC 43049 / DSM 3752 / JCM 8966 / VKM B-1809) (Halobacterium marismortui) protein is N-(5'-phosphoribosyl)anthranilate isomerase.